The sequence spans 64 residues: Large ribosomal subunit protein bL35 (64 aa).

2 stretches are compositionally biased toward basic residues: residues 1-15 (MPKNKTHSGASKRFK) and 27-42 (AGKRHLLEHKSSKKTR). Residues 1–45 (MPKNKTHSGASKRFKITGSGKVLRERAGKRHLLEHKSSKKTRSLT) are disordered.

It belongs to the bacterial ribosomal protein bL35 family.

This is Large ribosomal subunit protein bL35 from Streptomyces griseus subsp. griseus (strain JCM 4626 / CBS 651.72 / NBRC 13350 / KCC S-0626 / ISP 5235).